Consider the following 374-residue polypeptide: Dual-specificity RNA methyltransferase RlmN (374 aa).

Glu-91 functions as the Proton acceptor in the catalytic mechanism. The 244-residue stretch at 97–340 (EDDRGTLCVS…TTVRKTRGDD (244 aa)) folds into the Radical SAM core domain. An intrachain disulfide couples Cys-104 to Cys-345. Residues Cys-111, Cys-115, and Cys-118 each contribute to the [4Fe-4S] cluster site. S-adenosyl-L-methionine-binding positions include 166–167 (GE), Ser-198, 220–222 (SLH), and Asn-302. Cys-345 serves as the catalytic S-methylcysteine intermediate.

Belongs to the radical SAM superfamily. RlmN family. Requires [4Fe-4S] cluster as cofactor.

The protein resides in the cytoplasm. The catalysed reaction is adenosine(2503) in 23S rRNA + 2 reduced [2Fe-2S]-[ferredoxin] + 2 S-adenosyl-L-methionine = 2-methyladenosine(2503) in 23S rRNA + 5'-deoxyadenosine + L-methionine + 2 oxidized [2Fe-2S]-[ferredoxin] + S-adenosyl-L-homocysteine. It catalyses the reaction adenosine(37) in tRNA + 2 reduced [2Fe-2S]-[ferredoxin] + 2 S-adenosyl-L-methionine = 2-methyladenosine(37) in tRNA + 5'-deoxyadenosine + L-methionine + 2 oxidized [2Fe-2S]-[ferredoxin] + S-adenosyl-L-homocysteine. Specifically methylates position 2 of adenine 2503 in 23S rRNA and position 2 of adenine 37 in tRNAs. m2A2503 modification seems to play a crucial role in the proofreading step occurring at the peptidyl transferase center and thus would serve to optimize ribosomal fidelity. The polypeptide is Dual-specificity RNA methyltransferase RlmN (Delftia acidovorans (strain DSM 14801 / SPH-1)).